The primary structure comprises 184 residues: Photosystem I assembly protein Ycf4 (184 aa).

2 consecutive transmembrane segments (helical) span residues 22–42 and 57–77; these read FFWACILFLGSLGFLLVGTSS and ILFFPQGIVMSFYGIAGLFIS.

The protein belongs to the Ycf4 family.

The protein resides in the plastid. The protein localises to the chloroplast thylakoid membrane. In terms of biological role, seems to be required for the assembly of the photosystem I complex. The polypeptide is Photosystem I assembly protein Ycf4 (Nandina domestica (Heavenly bamboo)).